A 309-amino-acid polypeptide reads, in one-letter code: 4-hydroxy-3-methylbut-2-enyl diphosphate reductase (309 aa).

[4Fe-4S] cluster is bound at residue Cys-12. Positions 43 and 77 each coordinate (2E)-4-hydroxy-3-methylbut-2-enyl diphosphate. Residues His-43 and His-77 each contribute to the dimethylallyl diphosphate site. Residues His-43 and His-77 each contribute to the isopentenyl diphosphate site. Cys-99 is a [4Fe-4S] cluster binding site. Position 127 (His-127) interacts with (2E)-4-hydroxy-3-methylbut-2-enyl diphosphate. Dimethylallyl diphosphate is bound at residue His-127. Residue His-127 coordinates isopentenyl diphosphate. Glu-129 functions as the Proton donor in the catalytic mechanism. A (2E)-4-hydroxy-3-methylbut-2-enyl diphosphate-binding site is contributed by Thr-167. Cys-197 is a [4Fe-4S] cluster binding site. (2E)-4-hydroxy-3-methylbut-2-enyl diphosphate is bound by residues Ser-225, Ser-226, Asn-227, and Ser-269. Residues Ser-225, Ser-226, Asn-227, and Ser-269 each coordinate dimethylallyl diphosphate. Isopentenyl diphosphate contacts are provided by Ser-225, Ser-226, Asn-227, and Ser-269.

It belongs to the IspH family. [4Fe-4S] cluster serves as cofactor.

It carries out the reaction isopentenyl diphosphate + 2 oxidized [2Fe-2S]-[ferredoxin] + H2O = (2E)-4-hydroxy-3-methylbut-2-enyl diphosphate + 2 reduced [2Fe-2S]-[ferredoxin] + 2 H(+). The catalysed reaction is dimethylallyl diphosphate + 2 oxidized [2Fe-2S]-[ferredoxin] + H2O = (2E)-4-hydroxy-3-methylbut-2-enyl diphosphate + 2 reduced [2Fe-2S]-[ferredoxin] + 2 H(+). The protein operates within isoprenoid biosynthesis; dimethylallyl diphosphate biosynthesis; dimethylallyl diphosphate from (2E)-4-hydroxy-3-methylbutenyl diphosphate: step 1/1. Its pathway is isoprenoid biosynthesis; isopentenyl diphosphate biosynthesis via DXP pathway; isopentenyl diphosphate from 1-deoxy-D-xylulose 5-phosphate: step 6/6. Its function is as follows. Catalyzes the conversion of 1-hydroxy-2-methyl-2-(E)-butenyl 4-diphosphate (HMBPP) into a mixture of isopentenyl diphosphate (IPP) and dimethylallyl diphosphate (DMAPP). Acts in the terminal step of the DOXP/MEP pathway for isoprenoid precursor biosynthesis. The chain is 4-hydroxy-3-methylbut-2-enyl diphosphate reductase from Wolbachia pipientis wMel.